The following is a 150-amino-acid chain: Large ribosomal subunit protein bL9 (150 aa).

Belongs to the bacterial ribosomal protein bL9 family.

In terms of biological role, binds to the 23S rRNA. This is Large ribosomal subunit protein bL9 from Enterococcus faecalis (strain ATCC 700802 / V583).